The sequence spans 339 residues: Peroxidase 29 (339 aa).

Residues 1 to 28 (MKPKSKVAESTAASCFLVMSLLCSCIIG) form the signal peptide. 4 disulfide bridges follow: C47–C127, C80–C85, C133–C335, and C213–C242. H78 (proton acceptor) is an active-site residue. Ca(2+)-binding residues include D79, V82, G84, D86, and S88. P176 provides a ligand contact to substrate. Residue H206 participates in heme b binding. T207 contacts Ca(2+). N224 carries an N-linked (GlcNAc...) asparagine glycan. Ca(2+) contacts are provided by D260, T262, and D267.

It belongs to the peroxidase family. Classical plant (class III) peroxidase subfamily. Requires heme b as cofactor. It depends on Ca(2+) as a cofactor.

It localises to the secreted. It catalyses the reaction 2 a phenolic donor + H2O2 = 2 a phenolic radical donor + 2 H2O. Its function is as follows. Removal of H(2)O(2), oxidation of toxic reductants, biosynthesis and degradation of lignin, suberization, auxin catabolism, response to environmental stresses such as wounding, pathogen attack and oxidative stress. These functions might be dependent on each isozyme/isoform in each plant tissue. The protein is Peroxidase 29 (PER29) of Arabidopsis thaliana (Mouse-ear cress).